The primary structure comprises 266 residues: Probable phosphoadenosine phosphosulfate reductase (266 aa).

The interval 219 to 246 (TQPVREGEDERAGRWRGREKTECGLHSH) is disordered. A compositionally biased stretch (basic and acidic residues) spans 223–243 (REGEDERAGRWRGREKTECGL).

This sequence belongs to the PAPS reductase family. CysH subfamily.

The protein resides in the cytoplasm. Its subcellular location is the nucleus. It carries out the reaction [thioredoxin]-disulfide + sulfite + adenosine 3',5'-bisphosphate + 2 H(+) = [thioredoxin]-dithiol + 3'-phosphoadenylyl sulfate. The protein operates within sulfur metabolism; hydrogen sulfide biosynthesis; sulfite from sulfate: step 3/3. The NADP dependent reduction of PAPS into sulfite involves thioredoxin which probably plays the role of a thiol carrier. Required for methionine synthesis. This Schizosaccharomyces pombe (strain 972 / ATCC 24843) (Fission yeast) protein is Probable phosphoadenosine phosphosulfate reductase (met16).